Consider the following 184-residue polypeptide: UPF0397 protein SAB2561c (184 aa).

Transmembrane regions (helical) follow at residues 11-31 (VVAIGIGAAVFVILGRFVVIP), 44-64 (AFLALISAIFGPFAGLMTGLV), 77-97 (AWWSWVICSGIIGCLYGWIGL), 111-131 (MIYFNIGQIIANIICWALIAP), and 148-168 (QGVISAVLNIISVGIIGTILL).

This sequence belongs to the UPF0397 family.

The protein resides in the cell membrane. The sequence is that of UPF0397 protein SAB2561c from Staphylococcus aureus (strain bovine RF122 / ET3-1).